Consider the following 581-residue polypeptide: Laccase-2 (581 aa).

Positions M1–A19 are cleaved as a signal peptide. Plastocyanin-like domains lie at S74 to T191 and D197 to S353. Residues N77, N93, and N120 are each glycosylated (N-linked (GlcNAc...) asparagine). Residues H125, H127, H169, and H171 each contribute to the Cu cation site. Cysteines 146 and 562 form a disulfide. N-linked (GlcNAc...) asparagine glycosylation is found at N232, N283, N343, N408, N427, and N441. Residues L413–S547 form the Plastocyanin-like 3 domain. Residues H464, H467, H469, H526, C527, H528, and H532 each coordinate Cu cation.

Belongs to the multicopper oxidase family. Cu cation is required as a cofactor.

It is found in the secreted. It catalyses the reaction 4 hydroquinone + O2 = 4 benzosemiquinone + 2 H2O. Its function is as follows. Lignin degradation and detoxification of lignin-derived products. This chain is Laccase-2 (lcc2), found in Botryotinia fuckeliana (Noble rot fungus).